We begin with the raw amino-acid sequence, 533 residues long: DNA primase large subunit (533 aa).

[4Fe-4S] cluster-binding residues include Cys298, Cys377, Cys393, and Cys433. Positions 466–492 are disordered; it reads RQKRANGSAPPKARIRPDIKGHGDRSM. The segment covering 480-490 has biased composition (basic and acidic residues); it reads IRPDIKGHGDR.

The protein belongs to the eukaryotic-type primase large subunit family. In terms of assembly, heterodimer of a catalytic subunit Prim1 and a regulatory subunit Prim2, also known as the DNA primase complex. Component of the alpha DNA polymerase complex (also known as the alpha DNA polymerase-primase complex) consisting of four subunits: the catalytic subunit PolA1, the regulatory subunit PolA2, and the primase complex subunits Prim1 and Prim2 respectively. PolA1 associates with the DNA primase complex before association with PolA2. [4Fe-4S] cluster is required as a cofactor. Expressed in embryos (at protein level).

Regulatory subunit of the DNA primase complex and component of the DNA polymerase alpha complex (also known as the alpha DNA polymerase-primase complex) which play an essential role in the initiation of DNA synthesis. During the S phase of the cell cycle, the DNA polymerase alpha complex (composed of a catalytic subunit PolA1, an accessory subunit PolA2 and two primase subunits, the catalytic subunit Prim1 and the regulatory subunit Prim2) is recruited to DNA at the replicative forks. The primase subunit of the polymerase alpha complex initiates DNA synthesis by oligomerising short RNA primers on both leading and lagging strands. These primers are initially extended by the polymerase alpha catalytic subunit and subsequently transferred to polymerase delta and polymerase epsilon for processive synthesis on the lagging and leading strand, respectively. In the primase complex, both subunits are necessary for the initial di-nucleotide formation, but the extension of the primer depends only on the catalytic subunit. Stabilizes and modulates the activity of the catalytic subunit. This Drosophila melanogaster (Fruit fly) protein is DNA primase large subunit.